A 152-amino-acid polypeptide reads, in one-letter code: Protein PLANT CADMIUM RESISTANCE 2 (152 aa).

Residues 57–79 traverse the membrane as a helical segment; the sequence is TAGALYALIAVVTGCACIYSCFY.

This sequence belongs to the cornifelin family. Homooligomer. As to expression, expressed in roots, leaves, shoots, stems, flowers and siliques. In leaves, restricted mainly to the vascular tissue. Expressed in all cells in the root tip, in the vascular tissue and the epidermis in the elongation zone, and only in the epidermal cells in the root hair zone.

It is found in the cell membrane. In terms of biological role, zinc transporter acting in both zinc extrusion and long-distance zinc transport. Involved in the loading of zinc into the xyleme and in the detoxification of excess zinc at the epidermal cells. Acts independently from the zinc transporters HMA2 and HMA4. May be also involved in cadmium resistance. In Arabidopsis thaliana (Mouse-ear cress), this protein is Protein PLANT CADMIUM RESISTANCE 2 (PCR2).